Here is an 810-residue protein sequence, read N- to C-terminus: AMP deaminase (810 aa).

Polar residues predominate over residues 1 to 10 (MDNQATQRLN). Disordered regions lie at residues 1–61 (MDNQ…SHES) and 114–137 (AAMN…PRTL). Phosphoserine occurs at positions 19, 58, and 61. Polar residues predominate over residues 125–137 (HASQNSGGKPRTL). Residue Ser138 is modified to Phosphoserine. The Zn(2+) site is built by His362 and His364. Substrate contacts are provided by residues His364 and 433 to 438 (KFNLKY). Position 630 (His630) interacts with Zn(2+). Glu633 contacts substrate. Residue His652 is the Proton acceptor of the active site. Asp707 contributes to the Zn(2+) binding site. A substrate-binding site is contributed by 708–711 (DPLQ).

Belongs to the metallo-dependent hydrolases superfamily. Adenosine and AMP deaminases family. Homotetramer. The cofactor is Zn(2+).

The enzyme catalyses AMP + H2O + H(+) = IMP + NH4(+). Its pathway is purine metabolism; IMP biosynthesis via salvage pathway; IMP from AMP: step 1/1. Functionally, AMP deaminase plays a critical role in energy metabolism. The polypeptide is AMP deaminase (AMD1) (Saccharomyces cerevisiae (strain ATCC 204508 / S288c) (Baker's yeast)).